Consider the following 286-residue polypeptide: Shikimate dehydrogenase (NADP(+)) (286 aa).

Residues 19–21 and Thr66 contribute to the shikimate site; that span reads SVS. Lys70 functions as the Proton acceptor in the catalytic mechanism. The shikimate site is built by Asn91 and Asp106. NADP(+) contacts are provided by residues 130–134 and Ala225; that span reads GAGGS. Tyr227 serves as a coordination point for shikimate. Gly248 contributes to the NADP(+) binding site.

It belongs to the shikimate dehydrogenase family. Homodimer.

The enzyme catalyses shikimate + NADP(+) = 3-dehydroshikimate + NADPH + H(+). The protein operates within metabolic intermediate biosynthesis; chorismate biosynthesis; chorismate from D-erythrose 4-phosphate and phosphoenolpyruvate: step 4/7. Functionally, involved in the biosynthesis of the chorismate, which leads to the biosynthesis of aromatic amino acids. Catalyzes the reversible NADPH linked reduction of 3-dehydroshikimate (DHSA) to yield shikimate (SA). The chain is Shikimate dehydrogenase (NADP(+)) from Dehalococcoides mccartyi (strain CBDB1).